The following is a 431-amino-acid chain: Enolase (431 aa).

Q163 lines the (2R)-2-phosphoglycerate pocket. The Proton donor role is filled by E205. Mg(2+)-binding residues include D242, E288, and D315. Positions 340, 369, 370, and 391 each coordinate (2R)-2-phosphoglycerate. K340 functions as the Proton acceptor in the catalytic mechanism.

The protein belongs to the enolase family. Mg(2+) is required as a cofactor.

The protein localises to the cytoplasm. The protein resides in the secreted. Its subcellular location is the cell surface. The enzyme catalyses (2R)-2-phosphoglycerate = phosphoenolpyruvate + H2O. It functions in the pathway carbohydrate degradation; glycolysis; pyruvate from D-glyceraldehyde 3-phosphate: step 4/5. Its function is as follows. Catalyzes the reversible conversion of 2-phosphoglycerate (2-PG) into phosphoenolpyruvate (PEP). It is essential for the degradation of carbohydrates via glycolysis. The sequence is that of Enolase from Bacillus mycoides (strain KBAB4) (Bacillus weihenstephanensis).